The primary structure comprises 718 residues: Effector protein hopM1 (718 aa).

The span at Met-1 to Gly-10 shows a compositional bias: gly residues. Disordered stretches follow at residues Met-1–Pro-63 and Gly-683–Arg-718. A compositionally biased stretch (polar residues) spans Ser-11–Pro-22. Over residues Ala-44–Ala-60 the composition is skewed to low complexity.

In terms of assembly, interacts with the chaperone ShcM.

It is found in the secreted. The protein localises to the host membrane. Its function is as follows. Involved in the suppression of basal resistance and promotion of disease symptoms in plants. May be involved in the inhibition of a host vesicle trafficking pathway. The sequence is that of Effector protein hopM1 (hopM1) from Pseudomonas syringae pv. syringae (strain B728a).